The chain runs to 253 residues: RNA polymerase sigma factor SigI6 (253 aa).

Positions 63-76 (EEYSVALLAFNEAI) match the Polymerase core binding motif. A DNA-binding region (H-T-H motif) is located at residues 203-222 (TLELLKLAKVSRRTIERNKK).

It belongs to the sigma-70 factor family. SigI subfamily. In terms of assembly, interacts with RsgI6.

It localises to the cytoplasm. Its activity is regulated as follows. Negatively regulated by the anti-sigma-I factor RsgI6. Binding of the polysaccharide substrate to RsgI6 may lead to the release and activation of SigI6. Its function is as follows. Sigma factors are initiation factors that promote the attachment of RNA polymerase to specific initiation sites and are then released. This sigma factor is involved in regulation of cellulosomal genes via an external polysaccharide-sensing mechanism. Recognizes the predicted promoters associated with sigI6 itself, xyn11B, xyn10D, xyn10Z, xyn10Y, cel9V, cseP, sigI1, cipA, and rsgI5. This Acetivibrio thermocellus (strain ATCC 27405 / DSM 1237 / JCM 9322 / NBRC 103400 / NCIMB 10682 / NRRL B-4536 / VPI 7372) (Clostridium thermocellum) protein is RNA polymerase sigma factor SigI6.